The sequence spans 109 residues: Putative membrane protein insertion efficiency factor (109 aa).

Belongs to the UPF0161 family.

The protein resides in the cell inner membrane. In terms of biological role, could be involved in insertion of integral membrane proteins into the membrane. The chain is Putative membrane protein insertion efficiency factor from Rhodopseudomonas palustris (strain BisB18).